Consider the following 404-residue polypeptide: Cysteine desulfurase IscS (404 aa).

Residues 75 to 76 (AT), Asn155, Gln183, and 203 to 205 (SGH) each bind pyridoxal 5'-phosphate. At Lys206 the chain carries N6-(pyridoxal phosphate)lysine. Residue Thr243 participates in pyridoxal 5'-phosphate binding. Cys328 (cysteine persulfide intermediate) is an active-site residue. [2Fe-2S] cluster is bound at residue Cys328.

Belongs to the class-V pyridoxal-phosphate-dependent aminotransferase family. NifS/IscS subfamily. As to quaternary structure, homodimer. Forms a heterotetramer with IscU, interacts with other sulfur acceptors. Requires pyridoxal 5'-phosphate as cofactor.

The protein localises to the cytoplasm. The enzyme catalyses (sulfur carrier)-H + L-cysteine = (sulfur carrier)-SH + L-alanine. Its pathway is cofactor biosynthesis; iron-sulfur cluster biosynthesis. Master enzyme that delivers sulfur to a number of partners involved in Fe-S cluster assembly, tRNA modification or cofactor biosynthesis. Catalyzes the removal of elemental sulfur atoms from cysteine to produce alanine. Functions as a sulfur delivery protein for Fe-S cluster synthesis onto IscU, an Fe-S scaffold assembly protein, as well as other S acceptor proteins. This Actinobacillus succinogenes (strain ATCC 55618 / DSM 22257 / CCUG 43843 / 130Z) protein is Cysteine desulfurase IscS.